The following is a 414-amino-acid chain: WW domain-containing oxidoreductase (414 aa).

The interval 1-23 (MAALKYAGLEDTDSEEELPPGWE) is disordered. The WW 1 domain occupies 16-49 (EELPPGWEERTTKDGWVYYANHLEEKTQWEHPKS). A Nuclear localization signal motif is present at residues 50-55 (GKRKRV). Residues 57–90 (GGLPYGWEQETDENGQVYFVDHINKRTTYLDPRL) form the WW 2 domain. 131–137 (GANSGIG) is an NADP(+) binding site. Ser-260 provides a ligand contact to substrate. Tyr-293 functions as the Proton acceptor in the catalytic mechanism.

It belongs to the short-chain dehydrogenases/reductases (SDR) family.

The protein resides in the cytoplasm. The protein localises to the mitochondrion. It is found in the golgi apparatus. It localises to the lysosome. In terms of biological role, putative oxidoreductase. Acts as a tumor suppressor and plays a role in apoptosis. May function synergistically with p53/TP53 to control genotoxic stress-induced cell death. Plays a role in TGFB1 signaling and TGFB1-mediated cell death. May also play a role in tumor necrosis factor (TNF)-mediated cell death. Required for normal bone development. Inhibits Wnt signaling. The protein is WW domain-containing oxidoreductase (WWOX) of Gallus gallus (Chicken).